A 382-amino-acid chain; its full sequence is U11/U12 small nuclear ribonucleoprotein 59 kDa protein (382 aa).

The stretch at 31-63 forms a coiled coil; that stretch reads NTKNITDQLKQLQDTLNLAKSMEKELEALKMIK. Positions 274–297 are disordered; the sequence is SEENTTLTTSNKTNNDTDKDSNTN. Positions 277-287 are enriched in low complexity; that stretch reads NTTLTTSNKTN.

Component of the U11/U12 snRNPs that are part of the U12-type spliceosome.

It localises to the nucleus. The polypeptide is U11/U12 small nuclear ribonucleoprotein 59 kDa protein (SNRNP59) (Arabidopsis thaliana (Mouse-ear cress)).